The following is a 200-amino-acid chain: GTP cyclohydrolase 1 (200 aa).

Zn(2+)-binding residues include Cys87, His90, and Cys158.

Belongs to the GTP cyclohydrolase I family. In terms of assembly, toroid-shaped homodecamer, composed of two pentamers of five dimers.

It catalyses the reaction GTP + H2O = 7,8-dihydroneopterin 3'-triphosphate + formate + H(+). It participates in cofactor biosynthesis; 7,8-dihydroneopterin triphosphate biosynthesis; 7,8-dihydroneopterin triphosphate from GTP: step 1/1. This chain is GTP cyclohydrolase 1, found in Xanthomonas campestris pv. campestris (strain ATCC 33913 / DSM 3586 / NCPPB 528 / LMG 568 / P 25).